The chain runs to 478 residues: Sulfate adenylyltransferase subunit 1 (478 aa).

The region spanning 24 to 240 (KSMLRFLTCG…VLEDIDIDAD (217 aa)) is the tr-type G domain. The tract at residues 33 to 40 (GSVDDGKS) is G1. 33 to 40 (GSVDDGKS) provides a ligand contact to GTP. Residues 91–95 (GITID) form a G2 region. The tract at residues 112–115 (DTPG) is G3. GTP contacts are provided by residues 112–116 (DTPGH) and 167–170 (NKMD). Residues 167-170 (NKMD) are G4. Positions 206–208 (SAL) are G5.

The protein belongs to the TRAFAC class translation factor GTPase superfamily. Classic translation factor GTPase family. CysN/NodQ subfamily. In terms of assembly, heterodimer composed of CysD, the smaller subunit, and CysN.

The catalysed reaction is sulfate + ATP + H(+) = adenosine 5'-phosphosulfate + diphosphate. It functions in the pathway sulfur metabolism; hydrogen sulfide biosynthesis; sulfite from sulfate: step 1/3. In terms of biological role, with CysD forms the ATP sulfurylase (ATPS) that catalyzes the adenylation of sulfate producing adenosine 5'-phosphosulfate (APS) and diphosphate, the first enzymatic step in sulfur assimilation pathway. APS synthesis involves the formation of a high-energy phosphoric-sulfuric acid anhydride bond driven by GTP hydrolysis by CysN coupled to ATP hydrolysis by CysD. The protein is Sulfate adenylyltransferase subunit 1 of Aliivibrio salmonicida (strain LFI1238) (Vibrio salmonicida (strain LFI1238)).